Reading from the N-terminus, the 206-residue chain is N-(5'-phosphoribosyl)anthranilate isomerase (206 aa).

The protein belongs to the TrpF family.

It carries out the reaction N-(5-phospho-beta-D-ribosyl)anthranilate = 1-(2-carboxyphenylamino)-1-deoxy-D-ribulose 5-phosphate. It participates in amino-acid biosynthesis; L-tryptophan biosynthesis; L-tryptophan from chorismate: step 3/5. In Azotobacter vinelandii (strain DJ / ATCC BAA-1303), this protein is N-(5'-phosphoribosyl)anthranilate isomerase.